A 546-amino-acid chain; its full sequence is ATP-dependent rRNA helicase RRP3 (546 aa).

Residues 1–108 (MSDFKRRKLE…DEEAEAQAAA (108 aa)) are disordered. Composition is skewed to acidic residues over residues 60 to 77 (SEEDEDEFGGFSGEEEED) and 94 to 103 (EAEQSDEEAE). The Q motif motif lies at 115 to 143 (KTFADLGVREELCDACENLGYKTATPIQT). The Helicase ATP-binding domain occupies 146-318 (IPLALAGKDI…RAALKNPVRV (173 aa)). 159-166 (AETGSGKT) contributes to the ATP binding site. A DEAD box motif is present at residues 265-268 (DEAD). In terms of domain architecture, Helicase C-terminal spans 342–490 (YKDLYLIHLL…EEKVSRDEVM (149 aa)). Over residues 504 to 515 (VREMKDLHDQRK) the composition is skewed to basic and acidic residues. The interval 504 to 546 (VREMKDLHDQRKSGRGGRGGGRGGGRGGRGRGGRRDNMDMDEG) is disordered. The segment covering 519–530 (GGRGGGRGGGRG) has biased composition (gly residues). The span at 536 to 546 (GRRDNMDMDEG) shows a compositional bias: basic and acidic residues.

This sequence belongs to the DEAD box helicase family. DDX47/RRP3 subfamily. In terms of assembly, interacts with the SSU processome.

Its subcellular location is the nucleus. It carries out the reaction ATP + H2O = ADP + phosphate + H(+). Functionally, ATP-dependent rRNA helicase required for pre-ribosomal RNA processing. Involved in the maturation of the 35S-pre-rRNA and to its cleavage to mature 18S rRNA. In Phaeosphaeria nodorum (strain SN15 / ATCC MYA-4574 / FGSC 10173) (Glume blotch fungus), this protein is ATP-dependent rRNA helicase RRP3.